Reading from the N-terminus, the 226-residue chain is Cobalt transport protein CbiM 2 (226 aa).

6 helical membrane-spanning segments follow: residues 6-26 (GFLP…VVAY), 43-63 (MLLG…MPSV), 75-95 (LGAI…VLLF), 107-127 (TLGA…AAVF), 135-155 (FPFG…TYVT), and 181-201 (VFAL…VVVM).

It belongs to the CbiM family. Forms an energy-coupling factor (ECF) transporter complex composed of an ATP-binding protein (A component, CbiO), a transmembrane protein (T component, CbiQ) and 2 possible substrate-capture proteins (S components, CbiM and CbiN) of unknown stoichimetry.

The protein localises to the cell inner membrane. It functions in the pathway cofactor biosynthesis; adenosylcobalamin biosynthesis. Functionally, part of the energy-coupling factor (ECF) transporter complex CbiMNOQ involved in cobalt import. The chain is Cobalt transport protein CbiM 2 from Pelobacter propionicus (strain DSM 2379 / NBRC 103807 / OttBd1).